A 305-amino-acid chain; its full sequence is Oxygen-dependent coproporphyrinogen-III oxidase (305 aa).

Serine 99 is a substrate binding site. Positions 103 and 113 each coordinate a divalent metal cation. Histidine 113 acts as the Proton donor in catalysis. 115–117 (NVR) is a binding site for substrate. A divalent metal cation-binding residues include histidine 152 and histidine 182. Residues 247–282 (YVEFNLVLDRGTLFGLQTGGRTESILMSMPPLARWE) form an important for dimerization region. Substrate is bound at residue 265–267 (GGR).

Belongs to the aerobic coproporphyrinogen-III oxidase family. Homodimer. A divalent metal cation is required as a cofactor.

It is found in the cytoplasm. The enzyme catalyses coproporphyrinogen III + O2 + 2 H(+) = protoporphyrinogen IX + 2 CO2 + 2 H2O. It participates in porphyrin-containing compound metabolism; protoporphyrin-IX biosynthesis; protoporphyrinogen-IX from coproporphyrinogen-III (O2 route): step 1/1. Involved in the heme biosynthesis. Catalyzes the aerobic oxidative decarboxylation of propionate groups of rings A and B of coproporphyrinogen-III to yield the vinyl groups in protoporphyrinogen-IX. In Vibrio cholerae serotype O1 (strain M66-2), this protein is Oxygen-dependent coproporphyrinogen-III oxidase.